Consider the following 112-residue polypeptide: DNA-binding protein Bv3F (112 aa).

Residues 65-92 (KRNSKRMSTVPKYRDPATGKTWSGRGRQ) are disordered. 2 consecutive DNA-binding regions follow at residues 89–94 (RGRQPA) and 89–95 (RGRQPAW).

Belongs to the histone-like protein H-NS family. In terms of assembly, homodimer that oligomerizes on DNA into higher-order complexes that form bridges between disparate regions of DNA compacting it.

Its subcellular location is the cytoplasm. It is found in the nucleoid. Functionally, a DNA-binding protein implicated in transcriptional repression and chromosome organization and compaction. Binds in the minor groove of AT-rich DNA. Binds nucleation sites in AT-rich DNA and bridges them, forming higher-order nucleoprotein complexes and condensing the chromosome. As many horizontally transferred genes are AT-rich, it plays a central role in silencing foreign genes. The protein is DNA-binding protein Bv3F of Burkholderia vietnamiensis (strain G4 / LMG 22486) (Burkholderia cepacia (strain R1808)).